The primary structure comprises 229 residues: 2,3-bisphosphoglycerate-dependent phosphoglycerate mutase (229 aa).

Substrate is bound by residues 8–15 (RHGKSEWN), 21–22 (TG), Arg-60, 87–90 (ERHY), Lys-98, 114–115 (RR), and 183–184 (GN). The active-site Tele-phosphohistidine intermediate is the His-9. The active-site Proton donor/acceptor is the Glu-87.

Belongs to the phosphoglycerate mutase family. BPG-dependent PGAM subfamily. As to quaternary structure, homodimer.

The catalysed reaction is (2R)-2-phosphoglycerate = (2R)-3-phosphoglycerate. It participates in carbohydrate degradation; glycolysis; pyruvate from D-glyceraldehyde 3-phosphate: step 3/5. Catalyzes the interconversion of 2-phosphoglycerate and 3-phosphoglycerate. The protein is 2,3-bisphosphoglycerate-dependent phosphoglycerate mutase of Nautilia profundicola (strain ATCC BAA-1463 / DSM 18972 / AmH).